The primary structure comprises 258 residues: Ribosomal RNA small subunit methyltransferase A (258 aa).

His-13, Leu-15, Gly-41, Asp-63, Asp-87, and Asn-106 together coordinate S-adenosyl-L-methionine.

This sequence belongs to the class I-like SAM-binding methyltransferase superfamily. rRNA adenine N(6)-methyltransferase family. RsmA subfamily.

The protein resides in the cytoplasm. It carries out the reaction adenosine(1518)/adenosine(1519) in 16S rRNA + 4 S-adenosyl-L-methionine = N(6)-dimethyladenosine(1518)/N(6)-dimethyladenosine(1519) in 16S rRNA + 4 S-adenosyl-L-homocysteine + 4 H(+). In terms of biological role, specifically dimethylates two adjacent adenosines (A1518 and A1519) in the loop of a conserved hairpin near the 3'-end of 16S rRNA in the 30S particle. May play a critical role in biogenesis of 30S subunits. This chain is Ribosomal RNA small subunit methyltransferase A, found in Cytophaga hutchinsonii (strain ATCC 33406 / DSM 1761 / CIP 103989 / NBRC 15051 / NCIMB 9469 / D465).